A 149-amino-acid chain; its full sequence is Cytochrome c-type biogenesis protein CcmE (149 aa).

Over M1–R7 the chain is Cytoplasmic. A helical; Signal-anchor for type II membrane protein transmembrane segment spans residues L8–A28. Residues F29 to K149 are Periplasmic-facing. Residues H123 and Y127 each coordinate heme.

It belongs to the CcmE/CycJ family.

The protein localises to the cell inner membrane. Its function is as follows. Heme chaperone required for the biogenesis of c-type cytochromes. Transiently binds heme delivered by CcmC and transfers the heme to apo-cytochromes in a process facilitated by CcmF and CcmH. This Allorhizobium ampelinum (strain ATCC BAA-846 / DSM 112012 / S4) (Agrobacterium vitis (strain S4)) protein is Cytochrome c-type biogenesis protein CcmE.